The primary structure comprises 506 residues: MSTQNYHIVAVPPNEWGHMRPMIAFLARLVAVSLNSVDITVTLIIAESAVAKARTELSIQLAGEGIQSAESRFEVVPTAVHMFWPADAYLPALKATYAEVIKKKEPDFALLESMIHPFFDVVRSSATKPIKVGAWLPVALPSWTSMAPICYIRDDPQAYVKQVETTMAEKGLGYMEAASDAYLSHVNGRVLRIPGFPEMTDYEGFPQEPPVLLPVAMVVDWVFGIRDADILVTSTAQALERQGLQVFSKWLKEQPKHSDILAVGPLTSQRTPEVARKEKEEADAGGFTAFLDAWAAKKGPKSVLYICFGSVLLPAEIEHLYAVMRVLLELQIPFIMVLSDAARAALPADLAAAVRDSGLVKLTPWAPQQYILAHAAVGWFLSHCGINGTLESLCLRVPMVCWPLFADQPVLSILVAQVYGCGYELGEVRKGFGLKYRASTGKTPGGTVEDVTREAREVFSKAFFNKAERAKVDANLEKMATELNAAWDAEGDARASALALLDFIRK.

This sequence belongs to the UDP-glycosyltransferase family.

It carries out the reaction 11-O-acetylcyathatriol + UDP-alpha-D-xylose = erinacine Q + UDP + H(+). The catalysed reaction is 11-O-acetylcyathatriol + UDP-alpha-D-glucose = erinacine Q2 + UDP + H(+). The protein operates within secondary metabolite biosynthesis. Its function is as follows. UDP-glycosyltransferase; part of the gene cluster that mediates the biosynthesis of erinacines, cyathane-xylosides that show unique biological activities, including leishmanicidal activity, stimulating activity for nerve growth-factor synthesis, and agonistic activity toward the kappa opioid receptor. Within the pathway, eriJ tranfers xylose from UDP-xylose onto C-14 of 11-O-acetyl-cyathatriol to form eracine Q, and, at a lower rate, glucose from UDP-D-glucose to produce eracine Q2. The first step of the erinacines biosynthesis pathway is catalyzed by the geranylgeranyl diphosphate (GGPP) synthase eriE via conversion of farnesyl pyrophosphate and isopentyl pyrophosphate into geranylgeranyl pyrophosphate (GGPP). GGPP is then substrate of the diterpene cyclase eriG for the production of cyatha-3,12-diene. The cytochrome P450 monooxygenase eriI then hydroxylates cyatha-3,12-diene at C-14 of the seven-membered ring to produce erinacol, which is further hydroxylated at C-15 by the cytochrome P450 monooxygenase eriC to yield cyathadiol. The cytochrome P450 monooxygenase eriA then catalyzes C-11 hydroxylation in the presence of the short chain dehydrogenase/reductase (SDR) eriH, which leads to the production of cyathatriol. The acetyltransferase eriL converts cyathatriol into 11-O-acetyl-cyathatriol. The SDR eriH catalyzes further oxidation of 11-O-acetyl-cyathatriol into 1-O-acetylcyathin A3. Finally, the glycosyl transferase eriJ tranfers xylose from UDP-xylose onto C-14 of 11-O-acetyl-cyathatriol to form eracine Q. EriJ is also able to convert 11-O-acetyl-cyathatriol to eracine Q2 by using UDP-D-glucose as cosubstrate, but at a lower rate. This is UDP-glycosyltransferase eriJ from Hericium erinaceus (Lion's mane mushroom).